Consider the following 154-residue polypeptide: Large ribosomal subunit protein uL13 (154 aa).

Belongs to the universal ribosomal protein uL13 family. Part of the 50S ribosomal subunit.

In terms of biological role, this protein is one of the early assembly proteins of the 50S ribosomal subunit, although it is not seen to bind rRNA by itself. It is important during the early stages of 50S assembly. The polypeptide is Large ribosomal subunit protein uL13 (Bradyrhizobium sp. (strain BTAi1 / ATCC BAA-1182)).